The following is a 121-amino-acid chain: Small ribosomal subunit protein uS13 (121 aa).

The disordered stretch occupies residues 91–121; it reads HRRGLPVRGQNTKNNARTRKGPSKTVAGKKK. The span at 106 to 121 shows a compositional bias: basic residues; the sequence is ARTRKGPSKTVAGKKK.

It belongs to the universal ribosomal protein uS13 family. In terms of assembly, part of the 30S ribosomal subunit. Forms a loose heterodimer with protein S19. Forms two bridges to the 50S subunit in the 70S ribosome.

Its function is as follows. Located at the top of the head of the 30S subunit, it contacts several helices of the 16S rRNA. In the 70S ribosome it contacts the 23S rRNA (bridge B1a) and protein L5 of the 50S subunit (bridge B1b), connecting the 2 subunits; these bridges are implicated in subunit movement. Contacts the tRNAs in the A and P-sites. The sequence is that of Small ribosomal subunit protein uS13 from Listeria monocytogenes serotype 4b (strain CLIP80459).